Here is a 1254-residue protein sequence, read N- to C-terminus: Structural polyprotein (1254 aa).

Residues methionine 1–phenylalanine 33 are necessary for nucleocapsid assembly and virus assembly. The interval phenylalanine 33–lysine 68 is host transcription inhibition. The Supraphysiological nuclear export signal signature appears at leucine 41 to leucine 48. The disordered stretch occupies residues methionine 45–valine 119. Positions lysine 64–lysine 68 match the Nuclear localization signal motif. Positions glycine 80–lysine 92 are enriched in basic residues. Positions alanine 91–threonine 127 are binding to the viral RNA. Residues threonine 93 and threonine 108 each carry the phosphothreonine modification. Residues asparagine 104–methionine 118 are compositionally biased toward basic residues. The ribosome-binding stretch occupies residues proline 112 to lysine 126. Position 124 is a phosphoserine (serine 124). Residues lysine 126–tryptophan 275 form the Peptidase S3 domain. At threonine 127 the chain carries Phosphothreonine. Residues histidine 152, aspartate 174, and serine 226 each act as charge relay system in the active site. The tract at residues serine 276–valine 287 is functions as an uncleaved signal peptide for the precursor of protein E3/E2. Over serine 276–threonine 701 the chain is Extracellular. 3 N-linked (GlcNAc...) asparagine; by host glycosylation sites follow: asparagine 286, asparagine 546, and asparagine 652. The helical transmembrane segment at isoleucine 702–leucine 722 threads the bilayer. Over phenylalanine 723 to alanine 757 the chain is Cytoplasmic. Residues cysteine 730, cysteine 750, and cysteine 751 are each lipidated (S-palmitoyl cysteine; by host). The tract at residues cysteine 730–cysteine 750 is transient transmembrane before p62-6K protein processing. Over glutamate 758 to glutamine 772 the chain is Extracellular. The chain crosses the membrane as a helical span at residues glutamine 773–leucine 793. At arginine 794–cysteine 795 the chain is on the cytoplasmic side. A helical transmembrane segment spans residues valine 796 to alanine 816. At threonine 817–serine 1224 the chain is on the extracellular side. 4 disulfide bridges follow: cysteine 861/cysteine 926, cysteine 874/cysteine 906, cysteine 875/cysteine 908, and cysteine 880/cysteine 890. The segment at valine 896–threonine 913 is E1 fusion peptide loop. An N-linked (GlcNAc...) asparagine; by host glycan is attached at asparagine 946. Intrachain disulfides connect cysteine 1071-cysteine 1083, cysteine 1113-cysteine 1188, cysteine 1118-cysteine 1192, and cysteine 1140-cysteine 1182. The helical transmembrane segment at leucine 1225 to methionine 1245 threads the bilayer. The Cytoplasmic segment spans residues tyrosine 1246–asparagine 1254.

As to quaternary structure, homodimer. Homomultimer. Interacts with host karyopherin KPNA4; this interaction allows the nuclear import of the viral capsid protein. Interacts with spike glycoprotein E2. Interacts with host IRAK1; the interaction leads to inhibition of IRAK1-dependent signaling. Part of a tetrameric complex composed of host CRM1, host importin alpha/beta dimer and the viral capsid; this complex blocks the receptor-mediated transport through the nuclear pore. Interacts with host phosphatase PPP1CA; this interaction dephosphorylates the capsid protein, which increases its ability to bind to the viral genome. In terms of assembly, the precursor of protein E3/E2 and E1 form a heterodimer shortly after synthesis. Interacts with spike glycoprotein E2. The precursor of protein E3/E2 and E1 form a heterodimer shortly after synthesis. Processing of the precursor of protein E3/E2 into E2 and E3 results in a heterodimer of the spike glycoproteins E2 and E1. Spike at virion surface are constituted of three E2-E1 heterodimers. After target cell attachment and endocytosis, E1 change conformation to form homotrimers. Interacts with 6K protein. Interacts with host LDLRAD3; this interaction mediates viral entry to the host cell. As to quaternary structure, interacts with spike glycoprotein E1. Processing of the precursor of protein E3/E2 into E2 and E3 results in a heterodimer of the spike glycoproteins E2 and E1. Spike at virion surface are constituted of a trimer of E2-E1 heterodimers. Interacts with 6K protein. Interacts with host LDLRAD3; this interaction mediates viral entry to the host cell. In terms of assembly, oligomer. Interacts with spike glycoprotein E1. Interacts with spike glycoprotein E2. Post-translationally, structural polyprotein: Specific enzymatic cleavages in vivo yield mature proteins. Capsid protein is auto-cleaved during polyprotein translation, unmasking a signal peptide at the N-terminus of the precursor of E3/E2. The remaining polyprotein is then targeted to the host endoplasmic reticulum, where host signal peptidase cleaves it into pE2, 6K and E1 proteins. pE2 is further processed to mature E3 and E2 by host furin in trans-Golgi vesicle. Palmitoylated via thioester bonds. These palmitoylations may induce disruption of the C-terminus transmembrane. This would result in the reorientation of E2 C-terminus from lumenal to cytoplasmic side. In terms of processing, phosphorylated on serine and threonine residues. Post-translationally, N-glycosylated. Palmitoylated via thioester bonds.

The protein localises to the virion. It localises to the host cytoplasm. It is found in the host cell membrane. The protein resides in the host nucleus. Its subcellular location is the virion membrane. It catalyses the reaction Autocatalytic release of the core protein from the N-terminus of the togavirus structural polyprotein by hydrolysis of a -Trp-|-Ser- bond.. In terms of biological role, forms an icosahedral capsid with a T=4 symmetry composed of 240 copies of the capsid protein surrounded by a lipid membrane through which penetrate 80 spikes composed of trimers of E1-E2 heterodimers. The capsid protein binds to the viral RNA genome at a site adjacent to a ribosome binding site for viral genome translation following genome release. Possesses a protease activity that results in its autocatalytic cleavage from the nascent structural protein. Following its self-cleavage, the capsid protein transiently associates with ribosomes, and within several minutes the protein binds to viral RNA and rapidly assembles into icosahedric core particles. The resulting nucleocapsid eventually associates with the cytoplasmic domain of the spike glycoprotein E2 at the cell membrane, leading to budding and formation of mature virions. In case of infection, new virions attach to target cells and after clathrin-mediated endocytosis their membrane fuses with the host endosomal membrane. This leads to the release of the nucleocapsid into the cytoplasm, followed by an uncoating event necessary for the genomic RNA to become accessible. The uncoating might be triggered by the interaction of capsid proteins with ribosomes. Binding of ribosomes would release the genomic RNA since the same region is genomic RNA-binding and ribosome-binding. Specifically inhibits interleukin-1 receptor-associated kinase 1/IRAK1-dependent signaling during viral entry, representing a means by which the alphaviruses may evade innate immune detection and activation prior to viral gene expression. Inhibits host transcription. Forms a tetrameric complex with XPO1/CRM1 and the nuclear import receptor importin. This complex blocks the central channel of host nuclear pores thereby inhibiting the receptor-mediated nuclear transport and thus the host mRNA and rRNA transcription. The inhibition of transcription is linked to a cytopathic effect on the host cell. Provides the signal sequence for the translocation of the precursor of protein E3/E2 to the host endoplasmic reticulum. Furin-cleaved E3 remains associated with spike glycoprotein E1 and mediates pH protection of the latter during the transport via the secretory pathway. After virion release from the host cell, the assembly protein E3 is gradually released in the extracellular space. Its function is as follows. Plays a role in viral attachment to target host cell, by binding to the cell receptor LDLRAD3. Synthesized as a p62 precursor which is processed by furin at the cell membrane just before virion budding, giving rise to E2-E1 heterodimer. The p62-E1 heterodimer is stable, whereas E2-E1 is unstable and dissociate at low pH. p62 is processed at the last step, presumably to avoid E1 fusion activation before its final export to cell surface. E2 C-terminus contains a transitory transmembrane that would be disrupted by palmitoylation, resulting in reorientation of the C-terminal tail from lumenal to cytoplasmic side. This step is critical since E2 C-terminus is involved in budding by interacting with capsid proteins. This release of E2 C-terminus in cytoplasm occurs lately in protein export, and precludes premature assembly of particles at the endoplasmic reticulum membrane. Functionally, acts as a viroporin that participates in virus glycoprotein processing and transport to the plasma membrane, cell permeabilization and budding of viral particles. Disrupts the calcium homeostasis of the cell, probably at the endoplasmic reticulum level. This leads to cytoplasmic calcium elevation. Because of its lipophilic properties, the 6K protein is postulated to influence the selection of lipids that interact with the transmembrane domains of the glycoproteins, which, in turn, affects the deformability of the bilayer required for the extreme curvature that occurs as budding proceeds. Present in low amount in virions, about 3% compared to viral glycoproteins. In terms of biological role, class II viral fusion protein. Fusion activity is inactive as long as E1 is bound to E2 in mature virion. After virus attachment to cell receptor LDLRAD3 and endocytosis, acidification of the endosome would induce dissociation of E1/E2 heterodimer and concomitant trimerization of the E1 subunits. This E1 trimer is fusion active, and promotes release of viral nucleocapsid in cytoplasm after endosome and viral membrane fusion. Efficient fusion requires the presence of cholesterol and sphingolipid in the target membrane. Fusion is optimal at levels of about 1 molecule of cholesterol per 2 molecules of phospholipids, and is specific for sterols containing a 3-beta-hydroxyl group. The sequence is that of Structural polyprotein from Bos taurus (Bovine).